The sequence spans 223 residues: Large ribosomal subunit protein bL25 (223 aa).

The disordered stretch occupies residues 198-223 (EEIGDRPRSAEEGAAPVKERKLRESE).

It belongs to the bacterial ribosomal protein bL25 family. CTC subfamily. As to quaternary structure, part of the 50S ribosomal subunit; part of the 5S rRNA/L5/L18/L25 subcomplex. Contacts the 5S rRNA. Binds to the 5S rRNA independently of L5 and L18.

This is one of the proteins that binds to the 5S RNA in the ribosome where it forms part of the central protuberance. This chain is Large ribosomal subunit protein bL25, found in Thermomicrobium roseum (strain ATCC 27502 / DSM 5159 / P-2).